A 178-amino-acid chain; its full sequence is Inner membrane-spanning protein YciB (178 aa).

5 helical membrane passes run 22–42, 50–70, 76–96, 121–141, and 149–169; these read IFWA…YSWY, MTLV…YFHN, WKVT…QWVM, IAWA…AFWL, and FKVF…GVYI.

The protein belongs to the YciB family.

The protein resides in the cell inner membrane. In terms of biological role, plays a role in cell envelope biogenesis, maintenance of cell envelope integrity and membrane homeostasis. The protein is Inner membrane-spanning protein YciB of Cronobacter sakazakii (strain ATCC BAA-894) (Enterobacter sakazakii).